The primary structure comprises 337 residues: tRNA N6-adenosine threonylcarbamoyltransferase (337 aa).

Positions 111 and 115 each coordinate Fe cation. Residues 134–138, Asp167, Gly180, and Asn272 each bind substrate; that span reads LVSGG. Asp300 is a binding site for Fe cation.

Belongs to the KAE1 / TsaD family. It depends on Fe(2+) as a cofactor.

The protein resides in the cytoplasm. The catalysed reaction is L-threonylcarbamoyladenylate + adenosine(37) in tRNA = N(6)-L-threonylcarbamoyladenosine(37) in tRNA + AMP + H(+). In terms of biological role, required for the formation of a threonylcarbamoyl group on adenosine at position 37 (t(6)A37) in tRNAs that read codons beginning with adenine. Is involved in the transfer of the threonylcarbamoyl moiety of threonylcarbamoyl-AMP (TC-AMP) to the N6 group of A37, together with TsaE and TsaB. TsaD likely plays a direct catalytic role in this reaction. The chain is tRNA N6-adenosine threonylcarbamoyltransferase from Pseudoalteromonas translucida (strain TAC 125).